Reading from the N-terminus, the 200-residue chain is Large ribosomal subunit protein uL4 (200 aa).

The segment at 42–65 (TRAQKTRSEVSGGGAKPWRQKGTG) is disordered.

This sequence belongs to the universal ribosomal protein uL4 family. As to quaternary structure, part of the 50S ribosomal subunit.

In terms of biological role, one of the primary rRNA binding proteins, this protein initially binds near the 5'-end of the 23S rRNA. It is important during the early stages of 50S assembly. It makes multiple contacts with different domains of the 23S rRNA in the assembled 50S subunit and ribosome. Functionally, forms part of the polypeptide exit tunnel. The protein is Large ribosomal subunit protein uL4 of Vibrio parahaemolyticus serotype O3:K6 (strain RIMD 2210633).